The primary structure comprises 214 residues: Large ribosomal subunit protein bL25 (214 aa).

Positions 179 to 214 (VPPTQGPSEAEIEEVEAGDADTPEPEVVGEKEEDEE) are disordered. Over residues 188–202 (AEIEEVEAGDADTPE) the composition is skewed to acidic residues.

Belongs to the bacterial ribosomal protein bL25 family. CTC subfamily. Part of the 50S ribosomal subunit; part of the 5S rRNA/L5/L18/L25 subcomplex. Contacts the 5S rRNA. Binds to the 5S rRNA independently of L5 and L18.

Its function is as follows. This is one of the proteins that binds to the 5S RNA in the ribosome where it forms part of the central protuberance. The chain is Large ribosomal subunit protein bL25 from Staphylococcus carnosus (strain TM300).